Here is a 594-residue protein sequence, read N- to C-terminus: MLRGIFHICLLASFLLLPFSSAVHDSGFTGGTDAPPPWDHNVSPPPETAPSPTPTSSPSTTSPPSPGPVAAPSPINNGSVSGDMTWWCNKTPHAETCNYYFRKSSQNNINLRPPRFRSEFLRMLVKVALDQAVITHSQTVKFGPSCTNNQRKAAWSDCVNLFQNTVAQLNRTLKGLNPAASSDVKCTDFDAQTWLSTAQTNIETCRSGSEDLNVSDFVMPVISNKNLSDLIGNCLAVNGVLMKQHDHTTTANHKEYFPSWVSRHERRLLVSASLAKSSPHLVVAQDRSGHFRSIQAAINFAARRRFKSRFVIYVKKGVYRENIDVGNDNHNIMLVGDGERKTIITSGRSVQHGYTTYNSATGGFGGQRFVAKDMTFINTAGPLRGQAVAVRSSSDLSVFYRVGIHGFQDTLYIHSQRQFFRECYISGTIDFIFGNAAVVFQNCMILVRRPLHGQANIITAQGRGDPFQNTGITIHSSRIIAASDLKPVIRAYKTYLGRPWQAYSRVTIMKTYIDNSISPLGWSPWLRGSNFALNTVFYGEYKNFGPGSSTRWRVRWKGFHAITSTAVASRFTVGSLIAGGSWLPATGVPFKSGL.

Positions 1–22 (MLRGIFHICLLASFLLLPFSSA) are cleaved as a signal peptide. The disordered stretch occupies residues 28-75 (FTGGTDAPPPWDHNVSPPPETAPSPTPTSSPSTTSPPSPGPVAAPSPI). Residues 34-71 (APPPWDHNVSPPPETAPSPTPTSSPSTTSPPSPGPVAA) are compositionally biased toward pro residues. N-linked (GlcNAc...) asparagine glycosylation is found at Asn77, Asn170, Asn213, and Asn226. A pectinesterase inhibitor 33 region spans residues 78–237 (GSVSGDMTWW…SDLIGNCLAV (160 aa)). A pectinesterase 33 region spans residues 280–581 (HLVVAQDRSG…TVGSLIAGGS (302 aa)). Substrate contacts are provided by Thr356 and Gln386. Asp409 acts as the Proton donor; for pectinesterase activity in catalysis. Residues Cys423 and Cys443 are joined by a disulfide bond. The Nucleophile; for pectinesterase activity role is filled by Asp430. Substrate is bound by residues Arg498 and Trp500.

This sequence in the N-terminal section; belongs to the PMEI family. In the C-terminal section; belongs to the pectinesterase family. As to expression, expressed in siliques.

The protein resides in the secreted. The protein localises to the cell wall. It catalyses the reaction [(1-&gt;4)-alpha-D-galacturonosyl methyl ester](n) + n H2O = [(1-&gt;4)-alpha-D-galacturonosyl](n) + n methanol + n H(+). The protein operates within glycan metabolism; pectin degradation; 2-dehydro-3-deoxy-D-gluconate from pectin: step 1/5. Functionally, acts in the modification of cell walls via demethylesterification of cell wall pectin. In Arabidopsis thaliana (Mouse-ear cress), this protein is Probable pectinesterase/pectinesterase inhibitor 33 (PME33).